Reading from the N-terminus, the 202-residue chain is ATP-dependent Clp protease proteolytic subunit (202 aa).

Serine 107 serves as the catalytic Nucleophile. Histidine 132 is a catalytic residue.

This sequence belongs to the peptidase S14 family. Fourteen ClpP subunits assemble into 2 heptameric rings which stack back to back to give a disk-like structure with a central cavity, resembling the structure of eukaryotic proteasomes.

The protein resides in the cytoplasm. The catalysed reaction is Hydrolysis of proteins to small peptides in the presence of ATP and magnesium. alpha-casein is the usual test substrate. In the absence of ATP, only oligopeptides shorter than five residues are hydrolyzed (such as succinyl-Leu-Tyr-|-NHMec, and Leu-Tyr-Leu-|-Tyr-Trp, in which cleavage of the -Tyr-|-Leu- and -Tyr-|-Trp bonds also occurs).. Functionally, cleaves peptides in various proteins in a process that requires ATP hydrolysis. Has a chymotrypsin-like activity. Plays a major role in the degradation of misfolded proteins. This is ATP-dependent Clp protease proteolytic subunit from Shewanella amazonensis (strain ATCC BAA-1098 / SB2B).